Reading from the N-terminus, the 107-residue chain is Stellacyanin (107 aa).

Residues 1–105 (TVYTVGDSAG…GQKVHINVTV (105 aa)) form the Phytocyanin domain. An N-linked (GlcNAc...) asparagine glycan is attached at Asn-28. His-46 is a Cu cation binding site. Cys-59 and Cys-93 are disulfide-bonded. A glycan (N-linked (GlcNAc...) asparagine) is linked at Asn-60. Cu cation is bound by residues Cys-87, His-92, and Gln-97. N-linked (GlcNAc...) asparagine glycosylation is present at Asn-102.

This chain is Stellacyanin, found in Toxicodendron vernicifluum (Japanese lacquer tree).